The primary structure comprises 335 residues: UPF0104 membrane protein PH1989 (335 aa).

8 helical membrane-spanning segments follow: residues 4–24, 34–54, 62–82, 122–142, 148–168, 231–251, 266–286, and 304–324; these read YLLI…AGIE, DIRF…IWAV, GANI…GIFL, ILDV…ALTI, LIIL…TTVF, LYSF…FLSL, ASIA…TEVV, and VTML…GILV.

The protein belongs to the UPF0104 family.

The protein localises to the cell membrane. This is UPF0104 membrane protein PH1989 from Pyrococcus horikoshii (strain ATCC 700860 / DSM 12428 / JCM 9974 / NBRC 100139 / OT-3).